The chain runs to 291 residues: Kidney mitochondrial carrier protein 1 (291 aa).

Solcar repeat units follow at residues 7-96, 104-189, and 198-289; these read KPFI…LKRL, ETLV…TKKH, and DTVY…LKKL. Helical transmembrane passes span 9 to 26, 71 to 89, 106 to 124, 164 to 183, 204 to 224, and 264 to 283; these read FIYG…TFPI, GIAP…KIGT, LVLN…SCIA, GVSL…LPVY, FLSS…VDVV, and GFWP…FITY.

It belongs to the mitochondrial carrier (TC 2.A.29) family.

The protein resides in the mitochondrion inner membrane. The enzyme catalyses sulfite(in) + sulfate(out) = sulfite(out) + sulfate(in). It catalyses the reaction thiosulfate(in) + sulfate(out) = thiosulfate(out) + sulfate(in). It carries out the reaction sulfate(out) + phosphate(in) = sulfate(in) + phosphate(out). The catalysed reaction is oxalate(in) + sulfate(out) = oxalate(out) + sulfate(in). The enzyme catalyses malonate(in) + sulfate(out) = malonate(out) + sulfate(in). It catalyses the reaction maleate(in) + sulfate(out) = maleate(out) + sulfate(in). It carries out the reaction (S)-malate(in) + sulfate(out) = (S)-malate(out) + sulfate(in). The catalysed reaction is (3S)-citramalate(in) + sulfate(out) = (3S)-citramalate(out) + sulfate(in). The enzyme catalyses (3R)-citramalate(in) + sulfate(out) = (3R)-citramalate(out) + sulfate(in). It catalyses the reaction sulfate(out) + succinate(in) = sulfate(in) + succinate(out). It carries out the reaction (S,S)-tartrate(in) + sulfate(out) = (S,S)-tartrate(out) + sulfate(in). The catalysed reaction is (2R,3R)-tartrate(in) + sulfate(out) = (2R,3R)-tartrate(out) + sulfate(in). The enzyme catalyses D-aspartate(in) + sulfate(out) = D-aspartate(out) + sulfate(in). It catalyses the reaction L-aspartate(in) + sulfate(out) = L-aspartate(out) + sulfate(in). It carries out the reaction sulfate(in) = sulfate(out). The catalysed reaction is phosphate(in) = phosphate(out). The enzyme catalyses (S)-malate(out) = (S)-malate(in). Its function is as follows. Probable transporter. In terms of biological role, antiporter that transports inorganic anions (sulfate, sulfite, thiosulfate and phosphate) and, to a lesser extent, a variety of dicarboxylates (e.g. malonate, malate and citramalate) and, even more so, aspartate. The sulfate/sulfate exchange is much higher than the phosphate/phosphate and malate/malate exchanges. The transport affinities is higher for sulfate and thiosulfate than for any other substrate. May catalyze the export of sulfite and thiosulfate (the hydrogen sulfide degradation products) from the mitochondria, thereby modulating the level of the hydrogen sulfide. Also may mediate a very low unidirectional transport of sulfate, phosphate and (S)-malate. The sequence is that of Kidney mitochondrial carrier protein 1 from Xenopus laevis (African clawed frog).